Consider the following 180-residue polypeptide: MANRLKEKYTNEVIPALTEKFNYTSVMAVPKVEKIVLNMGVGDAVSNAKNLEKAAAELALISGQKPLITKAKKSIAGFRLREGVAIGAKVTLRGERMYEFLDKLVSVSLPRVRDFHGVPTKSFDGRGNYTLGVKEQLIFPEISFDDVDKVRGLDIVIVTTANTDEESRELLKGLGMPFAK.

This sequence belongs to the universal ribosomal protein uL5 family. As to quaternary structure, part of the 50S ribosomal subunit; part of the 5S rRNA/L5/L18/L25 subcomplex. Contacts the 5S rRNA and the P site tRNA. Forms a bridge to the 30S subunit in the 70S ribosome.

In terms of biological role, this is one of the proteins that bind and probably mediate the attachment of the 5S RNA into the large ribosomal subunit, where it forms part of the central protuberance. In the 70S ribosome it contacts protein S13 of the 30S subunit (bridge B1b), connecting the 2 subunits; this bridge is implicated in subunit movement. Contacts the P site tRNA; the 5S rRNA and some of its associated proteins might help stabilize positioning of ribosome-bound tRNAs. The protein is Large ribosomal subunit protein uL5 of Streptococcus pyogenes serotype M1.